Here is a 233-residue protein sequence, read N- to C-terminus: 7-cyano-7-deazaguanine synthase (233 aa).

13-23 contacts ATP; that stretch reads LSGGLDSATAM. The Zn(2+) site is built by cysteine 197, cysteine 207, cysteine 210, and cysteine 213.

This sequence belongs to the QueC family. Zn(2+) serves as cofactor.

It catalyses the reaction 7-carboxy-7-deazaguanine + NH4(+) + ATP = 7-cyano-7-deazaguanine + ADP + phosphate + H2O + H(+). It functions in the pathway purine metabolism; 7-cyano-7-deazaguanine biosynthesis. Functionally, catalyzes the ATP-dependent conversion of 7-carboxy-7-deazaguanine (CDG) to 7-cyano-7-deazaguanine (preQ(0)). The polypeptide is 7-cyano-7-deazaguanine synthase (Desulfatibacillum aliphaticivorans).